Here is a 430-residue protein sequence, read N- to C-terminus: Adenylosuccinate synthetase (430 aa).

GTP is bound by residues glycine 12–lysine 18 and glycine 40–threonine 42. The active-site Proton acceptor is the aspartate 13. Positions 13 and 40 each coordinate Mg(2+). IMP is bound by residues aspartate 13–lysine 16, asparagine 38–histidine 41, threonine 128, arginine 142, glutamine 223, threonine 238, and arginine 302. The Proton donor role is filled by histidine 41. Position 298–304 (threonine 298–arginine 304) interacts with substrate. GTP-binding positions include arginine 304, serine 330–aspartate 332, and serine 412–glycine 414.

The protein belongs to the adenylosuccinate synthetase family. Homodimer. Requires Mg(2+) as cofactor.

It localises to the cytoplasm. It catalyses the reaction IMP + L-aspartate + GTP = N(6)-(1,2-dicarboxyethyl)-AMP + GDP + phosphate + 2 H(+). Its pathway is purine metabolism; AMP biosynthesis via de novo pathway; AMP from IMP: step 1/2. Functionally, plays an important role in the de novo pathway of purine nucleotide biosynthesis. Catalyzes the first committed step in the biosynthesis of AMP from IMP. The polypeptide is Adenylosuccinate synthetase (Streptococcus pyogenes serotype M4 (strain MGAS10750)).